A 286-amino-acid polypeptide reads, in one-letter code: Pyridoxal kinase PdxY (286 aa).

Substrate is bound by residues S9 and 44–45; that span reads TQ. ATP is bound by residues D111, E148, and K181. D222 is a substrate binding site.

It belongs to the pyridoxine kinase family. PdxY subfamily. In terms of assembly, homodimer. Mg(2+) is required as a cofactor.

The catalysed reaction is pyridoxal + ATP = pyridoxal 5'-phosphate + ADP + H(+). It functions in the pathway cofactor metabolism; pyridoxal 5'-phosphate salvage; pyridoxal 5'-phosphate from pyridoxal: step 1/1. Functionally, pyridoxal kinase involved in the salvage pathway of pyridoxal 5'-phosphate (PLP). Catalyzes the phosphorylation of pyridoxal to PLP. The polypeptide is Pyridoxal kinase PdxY (Actinobacillus succinogenes (strain ATCC 55618 / DSM 22257 / CCUG 43843 / 130Z)).